The following is a 778-amino-acid chain: Hyaluronate lyase (778 aa).

The tat-type signal signal peptide spans 1-33 (MSWNRRSFLGALGVTCLAGAGMVPIVRPRTAAA). Catalysis depends on residues Asn200, His250, and Tyr259.

It belongs to the polysaccharide lyase 8 family. Predicted to be exported by the Tat system. The position of the signal peptide cleavage has not been experimentally proven.

The catalysed reaction is [hyaluronan](n) = n 3-(4-deoxy-beta-D-gluc-4-enuronosyl)-N-acetyl-D-glucosamine + H2O. Its activity is regulated as follows. Is salt-dependent and is active over a wide range of NaCl concentrations. Activity is slightly promoted by Ni(2+), and inhibited by most of the tested metal ions, including Li(+), K(+), Ba(2+), Mg(2+), Zn(2+), Ca(2+), Mn(2+) and Al(3+). Degrades hyaluronic acid into unsaturated disaccharides as the end products. Exhibits very low activity against various types of chondroitin sulfate variants. This is Hyaluronate lyase from Thermasporomyces composti.